The sequence spans 231 residues: Large ribosomal subunit protein uL1 (231 aa).

Belongs to the universal ribosomal protein uL1 family. In terms of assembly, part of the 50S ribosomal subunit.

Its function is as follows. Binds directly to 23S rRNA. The L1 stalk is quite mobile in the ribosome, and is involved in E site tRNA release. Protein L1 is also a translational repressor protein, it controls the translation of the L11 operon by binding to its mRNA. This is Large ribosomal subunit protein uL1 from Macrococcus caseolyticus (strain JCSC5402) (Macrococcoides caseolyticum).